Consider the following 62-residue polypeptide: Coiled-coil domain-containing protein YLR146W-A (62 aa).

A coiled-coil region spans residues Glu14–Glu49.

In Saccharomyces cerevisiae (strain ATCC 204508 / S288c) (Baker's yeast), this protein is Coiled-coil domain-containing protein YLR146W-A.